A 386-amino-acid polypeptide reads, in one-letter code: NADH-ubiquinone oxidoreductase chain 4 (386 aa).

The next 11 helical transmembrane spans lie at 8–28 (SEFH…YFLF), 37–57 (WPLS…LTFT), 61–81 (FILF…LILG), 91–111 (ASYY…FIII), 133–153 (IFLL…AHIW), 167–187 (MVLA…VQVL), 189–209 (IYSE…SCLI), 219–239 (LIAY…LMSC), 247–267 (ILMM…SYLF), 283–303 (ISLF…NMGL), and 315–335 (FFIG…ILCF).

This sequence belongs to the complex I subunit 4 family.

It is found in the mitochondrion membrane. It carries out the reaction a ubiquinone + NADH + 5 H(+)(in) = a ubiquinol + NAD(+) + 4 H(+)(out). Core subunit of the mitochondrial membrane respiratory chain NADH dehydrogenase (Complex I) that is believed to belong to the minimal assembly required for catalysis. Complex I functions in the transfer of electrons from NADH to the respiratory chain. The immediate electron acceptor for the enzyme is believed to be ubiquinone. The protein is NADH-ubiquinone oxidoreductase chain 4 (ND4) of Artemia franciscana (Brine shrimp).